Consider the following 92-residue polypeptide: Large ribosomal subunit protein eL37 (92 aa).

Residues Cys-19, Cys-22, Cys-34, and Cys-37 each contribute to the Zn(2+) site. A C4-type zinc finger spans residues 19-37 (CRRCGRRSYHIQKSTCANC). Positions 50 to 92 (SEKAKRRKTTGSGRTAHLRDVHRRFKNGFQVGTPKGARGPENH) are disordered.

Belongs to the eukaryotic ribosomal protein eL37 family. Zn(2+) serves as cofactor.

In terms of biological role, binds to the 23S rRNA. This chain is Large ribosomal subunit protein eL37 (rpl37), found in Emericella nidulans (strain FGSC A4 / ATCC 38163 / CBS 112.46 / NRRL 194 / M139) (Aspergillus nidulans).